A 78-amino-acid chain; its full sequence is Small ribosomal subunit protein bS18A (78 aa).

The protein belongs to the bacterial ribosomal protein bS18 family. Part of the 30S ribosomal subunit. Forms a tight heterodimer with protein bS6.

Its function is as follows. Binds as a heterodimer with protein bS6 to the central domain of the 16S rRNA, where it helps stabilize the platform of the 30S subunit. This Streptomyces avermitilis (strain ATCC 31267 / DSM 46492 / JCM 5070 / NBRC 14893 / NCIMB 12804 / NRRL 8165 / MA-4680) protein is Small ribosomal subunit protein bS18A.